The chain runs to 328 residues: UDP-glucose 4-epimerase (328 aa).

NAD(+)-binding positions include 20-21 (FV), 41-46 (VRHAVN), 57-58 (DI), 77-81 (CAARA), Ser-123, Tyr-149, and Lys-153. Substrate-binding residues include Ser-123 and Tyr-149. Tyr-149 acts as the Proton acceptor in catalysis. Residues 198-199 (GI) and 215-217 (SIN) contribute to the substrate site.

It belongs to the NAD(P)-dependent epimerase/dehydratase family. Homodimer. It depends on NAD(+) as a cofactor.

The catalysed reaction is UDP-alpha-D-glucose = UDP-alpha-D-galactose. Its pathway is bacterial outer membrane biogenesis; LPS O-antigen biosynthesis. Functionally, involved in the metabolism of galactose. Catalyzes the conversion of UDP-galactose (UDP-Gal) to UDP-glucose (UDP-Glc) through a mechanism involving the transient reduction of NAD. This is UDP-glucose 4-epimerase (galE) from Vibrio cholerae.